A 425-amino-acid chain; its full sequence is Aspyridones cluster regulator (425 aa).

The segment at residues 100–127 is a DNA-binding region (zn(2)-C6 fungal-type); that stretch reads CVDCRASKTRCTGEPEGCKRCTFRKRPC. The tract at residues 132–159 is disordered; that stretch reads LRRSNTTQHGEQIEASSSTFTMSDEQGS. A compositionally biased stretch (polar residues) spans 133 to 157; the sequence is RRSNTTQHGEQIEASSSTFTMSDEQ.

It localises to the nucleus. Functionally, transcription factor involved in regulation of gene cluster that mediates the biosynthesis of aphidicolin. This chain is Aspyridones cluster regulator (TF), found in Neocamarosporium betae (Beet black rot fungus).